Reading from the N-terminus, the 570-residue chain is Proline--tRNA ligase (570 aa).

Belongs to the class-II aminoacyl-tRNA synthetase family. ProS type 1 subfamily. Homodimer.

It localises to the cytoplasm. It catalyses the reaction tRNA(Pro) + L-proline + ATP = L-prolyl-tRNA(Pro) + AMP + diphosphate. In terms of biological role, catalyzes the attachment of proline to tRNA(Pro) in a two-step reaction: proline is first activated by ATP to form Pro-AMP and then transferred to the acceptor end of tRNA(Pro). As ProRS can inadvertently accommodate and process non-cognate amino acids such as alanine and cysteine, to avoid such errors it has two additional distinct editing activities against alanine. One activity is designated as 'pretransfer' editing and involves the tRNA(Pro)-independent hydrolysis of activated Ala-AMP. The other activity is designated 'posttransfer' editing and involves deacylation of mischarged Ala-tRNA(Pro). The misacylated Cys-tRNA(Pro) is not edited by ProRS. The protein is Proline--tRNA ligase of Clostridium tetani (strain Massachusetts / E88).